A 512-amino-acid chain; its full sequence is tRNA-2-methylthio-N(6)-dimethylallyladenosine synthase (512 aa).

Positions 1-22 (MVAHDAAAGVTGEGAGPPVRRA) are disordered. The 117-residue stretch at 25-141 (RTYQVRTYGC…LPTLLERARH (117 aa)) folds into the MTTase N-terminal domain. The [4Fe-4S] cluster site is built by Cys34, Cys70, Cys104, Cys178, Cys182, and Cys185. The 237-residue stretch at 164 to 400 (RESAYAAWVS…IALQEQISLE (237 aa)) folds into the Radical SAM core domain. Residues 403–471 (RALVGQAVEV…PHHLIADAGV (69 aa)) enclose the TRAM domain.

The protein belongs to the methylthiotransferase family. MiaB subfamily. Monomer. [4Fe-4S] cluster is required as a cofactor.

Its subcellular location is the cytoplasm. It carries out the reaction N(6)-dimethylallyladenosine(37) in tRNA + (sulfur carrier)-SH + AH2 + 2 S-adenosyl-L-methionine = 2-methylsulfanyl-N(6)-dimethylallyladenosine(37) in tRNA + (sulfur carrier)-H + 5'-deoxyadenosine + L-methionine + A + S-adenosyl-L-homocysteine + 2 H(+). Functionally, catalyzes the methylthiolation of N6-(dimethylallyl)adenosine (i(6)A), leading to the formation of 2-methylthio-N6-(dimethylallyl)adenosine (ms(2)i(6)A) at position 37 in tRNAs that read codons beginning with uridine. This chain is tRNA-2-methylthio-N(6)-dimethylallyladenosine synthase, found in Mycobacterium bovis (strain ATCC BAA-935 / AF2122/97).